A 288-amino-acid polypeptide reads, in one-letter code: 4-diphosphocytidyl-2-C-methyl-D-erythritol kinase (288 aa).

Lysine 8 is an active-site residue. Position 90-100 (90-100 (PLEAGLAGGSA)) interacts with ATP. The active site involves aspartate 132.

This sequence belongs to the GHMP kinase family. IspE subfamily.

It catalyses the reaction 4-CDP-2-C-methyl-D-erythritol + ATP = 4-CDP-2-C-methyl-D-erythritol 2-phosphate + ADP + H(+). It participates in isoprenoid biosynthesis; isopentenyl diphosphate biosynthesis via DXP pathway; isopentenyl diphosphate from 1-deoxy-D-xylulose 5-phosphate: step 3/6. Functionally, catalyzes the phosphorylation of the position 2 hydroxy group of 4-diphosphocytidyl-2C-methyl-D-erythritol. The protein is 4-diphosphocytidyl-2-C-methyl-D-erythritol kinase of Carboxydothermus hydrogenoformans (strain ATCC BAA-161 / DSM 6008 / Z-2901).